Here is a 260-residue protein sequence, read N- to C-terminus: UPF0246 protein Bphyt_1375 (260 aa).

This sequence belongs to the UPF0246 family.

In Paraburkholderia phytofirmans (strain DSM 17436 / LMG 22146 / PsJN) (Burkholderia phytofirmans), this protein is UPF0246 protein Bphyt_1375.